The following is a 148-amino-acid chain: Hemoglobin subunit beta-2 (148 aa).

Residues E3–H148 form the Globin domain. Heme b contacts are provided by H64 and H93.

Heterotetramer of two alpha chains and two beta chains. As to expression, red blood cells.

Involved in oxygen transport from gills to the various peripheral tissues. The protein is Hemoglobin subunit beta-2 (ba2) of Danio rerio (Zebrafish).